A 129-amino-acid chain; its full sequence is Large ribosomal subunit protein bL17 (129 aa).

The protein belongs to the bacterial ribosomal protein bL17 family. In terms of assembly, part of the 50S ribosomal subunit. Contacts protein L32.

This chain is Large ribosomal subunit protein bL17, found in Acidovorax ebreus (strain TPSY) (Diaphorobacter sp. (strain TPSY)).